The chain runs to 332 residues: tRNA U34 carboxymethyltransferase (332 aa).

Residues lysine 96, tryptophan 110, lysine 115, glycine 135, 186–187 (LE), methionine 204, tyrosine 208, and arginine 323 contribute to the carboxy-S-adenosyl-L-methionine site.

It belongs to the class I-like SAM-binding methyltransferase superfamily. CmoB family. As to quaternary structure, homotetramer.

The enzyme catalyses carboxy-S-adenosyl-L-methionine + 5-hydroxyuridine(34) in tRNA = 5-carboxymethoxyuridine(34) in tRNA + S-adenosyl-L-homocysteine + H(+). Catalyzes carboxymethyl transfer from carboxy-S-adenosyl-L-methionine (Cx-SAM) to 5-hydroxyuridine (ho5U) to form 5-carboxymethoxyuridine (cmo5U) at position 34 in tRNAs. The chain is tRNA U34 carboxymethyltransferase from Hydrogenovibrio crunogenus (strain DSM 25203 / XCL-2) (Thiomicrospira crunogena).